Here is a 410-residue protein sequence, read N- to C-terminus: Acetate kinase (410 aa).

Asn-7 provides a ligand contact to Mg(2+). Position 14 (Lys-14) interacts with ATP. Arg-88 serves as a coordination point for substrate. Asp-145 acts as the Proton donor/acceptor in catalysis. Residues 203 to 207 (HAGNG), 278 to 280 (DTR), and 326 to 330 (GIGEN) contribute to the ATP site. Mg(2+) is bound at residue Glu-379.

Belongs to the acetokinase family. As to quaternary structure, homodimer. Mg(2+) serves as cofactor. Requires Mn(2+) as cofactor.

It localises to the cytoplasm. It catalyses the reaction acetate + ATP = acetyl phosphate + ADP. It functions in the pathway metabolic intermediate biosynthesis; acetyl-CoA biosynthesis; acetyl-CoA from acetate: step 1/2. Its function is as follows. Catalyzes the formation of acetyl phosphate from acetate and ATP. Can also catalyze the reverse reaction. The polypeptide is Acetate kinase (Chlorante-Aster yellows phytoplasma).